We begin with the raw amino-acid sequence, 452 residues long: Pup--protein ligase 1 (452 aa).

Mg(2+) is bound at residue E9. R53 is a binding site for ATP. A Mg(2+)-binding site is contributed by Y55. Catalysis depends on D57, which acts as the Proton acceptor. E63 is a binding site for Mg(2+). Residues T66 and W419 each contribute to the ATP site.

Belongs to the Pup ligase/Pup deamidase family. Pup-conjugating enzyme subfamily.

It carries out the reaction ATP + [prokaryotic ubiquitin-like protein]-L-glutamate + [protein]-L-lysine = ADP + phosphate + N(6)-([prokaryotic ubiquitin-like protein]-gamma-L-glutamyl)-[protein]-L-lysine.. It functions in the pathway protein degradation; proteasomal Pup-dependent pathway. It participates in protein modification; protein pupylation. Its function is as follows. Catalyzes the covalent attachment of the prokaryotic ubiquitin-like protein modifier Pup to the proteasomal substrate proteins, thereby targeting them for proteasomal degradation. This tagging system is termed pupylation. The ligation reaction involves the side-chain carboxylate of the C-terminal glutamate of Pup and the side-chain amino group of a substrate lysine. The sequence is that of Pup--protein ligase 1 from Rhodococcus erythropolis (Arthrobacter picolinophilus).